A 116-amino-acid chain; its full sequence is Aspartate 1-decarboxylase (116 aa).

Residue S25 is the Schiff-base intermediate with substrate; via pyruvic acid of the active site. A Pyruvic acid (Ser) modification is found at S25. Residue T57 participates in substrate binding. Y58 (proton donor) is an active-site residue. Substrate is bound at residue 73-75 (GAA).

Belongs to the PanD family. Heterooctamer of four alpha and four beta subunits. It depends on pyruvate as a cofactor. In terms of processing, is synthesized initially as an inactive proenzyme, which is activated by self-cleavage at a specific serine bond to produce a beta-subunit with a hydroxyl group at its C-terminus and an alpha-subunit with a pyruvoyl group at its N-terminus.

The protein localises to the cytoplasm. It carries out the reaction L-aspartate + H(+) = beta-alanine + CO2. It participates in cofactor biosynthesis; (R)-pantothenate biosynthesis; beta-alanine from L-aspartate: step 1/1. Catalyzes the pyruvoyl-dependent decarboxylation of aspartate to produce beta-alanine. This is Aspartate 1-decarboxylase from Christiangramia forsetii (strain DSM 17595 / CGMCC 1.15422 / KT0803) (Gramella forsetii).